The chain runs to 624 residues: Cell pattern formation-associated protein ust1 (624 aa).

2 disordered regions span residues methionine 1 to glycine 24 and arginine 43 to serine 99. Positions arginine 43–serine 62 are enriched in low complexity. The segment covering glutamine 70 to serine 85 has biased composition (basic residues). An HTH APSES-type domain is found at arginine 233–proline 339. The segment at residues glycine 267 to glutamate 288 is a DNA-binding region (H-T-H motif). Over residues alanine 352 to alanine 362 the composition is skewed to low complexity. 3 disordered regions span residues alanine 352–glutamine 456, glutamine 474–serine 504, and serine 538–glutamate 624. Positions proline 369–aspartate 391 are enriched in polar residues. Over residues threonine 392–serine 426 the composition is skewed to low complexity. The segment covering methionine 427–serine 451 has biased composition (polar residues). Residues leucine 571–alanine 587 are compositionally biased toward basic and acidic residues. The segment covering valine 615 to glutamate 624 has biased composition (gly residues).

Belongs to the EFG1/PHD1/stuA family. Post-translationally, phosphorylated but is not a target of cAMP signaling.

The protein localises to the nucleus. Functionally, transcription factor that regulates asexual reproduction. Binds the StuA-response elements (StRE) with the consensus sequence 5'-(A/T)CGCG(T/A)N(A/C)-3' at the promoters of target genes. Regulates dimorphism, virulence, and the sporulation program. Required for mating, gall induction, and sporogenesis in maize tissue. Regulates expression of the filament-down-regulated gene UM00205 and the teliospore-specific gene ssp1. The protein is Cell pattern formation-associated protein ust1 (ust1) of Mycosarcoma maydis (Corn smut fungus).